Reading from the N-terminus, the 579-residue chain is Aspartate--tRNA(Asp/Asn) ligase (579 aa).

Residue Glu-169 coordinates L-aspartate. The interval 193-196 (QLFK) is aspartate. Residue Arg-215 participates in L-aspartate binding. Residues 215–217 (RDE) and Gln-224 each bind ATP. His-437 serves as a coordination point for L-aspartate. Glu-471 contributes to the ATP binding site. Arg-478 lines the L-aspartate pocket. Position 523–526 (523–526 (GWDR)) interacts with ATP. The segment at 551 to 579 (DPLTGAPTPITAEQRREAGVDAVPEQATS) is disordered.

It belongs to the class-II aminoacyl-tRNA synthetase family. Type 1 subfamily. Homodimer.

It is found in the cytoplasm. It carries out the reaction tRNA(Asx) + L-aspartate + ATP = L-aspartyl-tRNA(Asx) + AMP + diphosphate. Its function is as follows. Aspartyl-tRNA synthetase with relaxed tRNA specificity since it is able to aspartylate not only its cognate tRNA(Asp) but also tRNA(Asn). Reaction proceeds in two steps: L-aspartate is first activated by ATP to form Asp-AMP and then transferred to the acceptor end of tRNA(Asp/Asn). This is Aspartate--tRNA(Asp/Asn) ligase from Thermobifida fusca (strain YX).